Reading from the N-terminus, the 590-residue chain is Acyl-CoA ligase sidI (590 aa).

Positions 6-14 (RLQQTLSHL) match the PTS2-type peroxisomal targeting signal motif. ATP is bound by residues 220 to 228 (TSGSTGNPK), 359 to 364 (SSYGLT), D449, and R464. T364 is a substrate binding site. CoA is bound by residues 472 to 474 (GGE) and 543 to 545 (YFF). K563 contributes to the ATP binding site.

It belongs to the ATP-dependent AMP-binding enzyme family.

The protein localises to the peroxisome. Its pathway is siderophore biosynthesis. In terms of biological role, acyl-CoA ligase; part of the siderophore biosynthetic pathway. Aspergillus fumigatus produces 4 types of siderophores, low-molecular-mass iron chelators, including excreted fusarinine C (FsC) and triacetylfusarinine C (TAFC) for iron uptake and intacellular ferricrocin (FC) for hyphal and hydroxyferricrocin (HFC) for conidial iron distribution and storage. TAFC consists of 3 N(2)-acetyl-N(5)-anhydromevalonyl-N(5)-hydroxyornithine residues cyclically linked by ester bonds; FC is a cyclic hexapeptide with the structure Gly-Ser-Gly-(N(5)-acetyl-N(5)-hydroxyornithine)x3. The biosynthesis of all four siderophores depends on the hydroxylation of ornithine, catalyzed by the monooxygenase sidA. Subsequently, the pathways for biosynthesis of extra- and intracellular siderophores split. For biosynthesis of extracellular siderophores, the transacylase sidF transfers anhydromevalonyl to N(5)-hydroxyornithine. The required anhydromevalonyl-CoA moiety is derived from mevalonate by CoA ligation and dehydration catalyzed by sidI and sidH respectively. The acetylation of N(5)-hydroxyornithine for FC biosynthesis involves the constitutively expressed sidL. FC is hydroxylated to HFC by an as yet uncharacterized enzyme during conidiation. Assembly of fusarinine C (FsC) and FC is catalyzed by two different nonribosomal peptide synthetases (NRPS), sidD and sidC respectively. Subsequently, sidG catalyzes N2-acetylation of FsC for forming TAFC. Both extra- and intracellular siderophores are crucial for growth during iron limitation and virulence. This Aspergillus fumigatus (strain ATCC MYA-4609 / CBS 101355 / FGSC A1100 / Af293) (Neosartorya fumigata) protein is Acyl-CoA ligase sidI.